The following is a 69-amino-acid chain: Putative membrane protein insertion efficiency factor (69 aa).

This sequence belongs to the UPF0161 family.

The protein resides in the cell inner membrane. Functionally, could be involved in insertion of integral membrane proteins into the membrane. This is Putative membrane protein insertion efficiency factor from Nitrosomonas eutropha (strain DSM 101675 / C91 / Nm57).